The chain runs to 200 residues: Large ribosomal subunit protein bL25 (200 aa).

This sequence belongs to the bacterial ribosomal protein bL25 family. CTC subfamily. In terms of assembly, part of the 50S ribosomal subunit; part of the 5S rRNA/L5/L18/L25 subcomplex. Contacts the 5S rRNA. Binds to the 5S rRNA independently of L5 and L18.

In terms of biological role, this is one of the proteins that binds to the 5S RNA in the ribosome where it forms part of the central protuberance. The chain is Large ribosomal subunit protein bL25 from Leifsonia xyli subsp. xyli (strain CTCB07).